The chain runs to 154 residues: Protein X (154 aa).

A mitochondrial targeting sequence region spans residues P68 to F117.

It belongs to the orthohepadnavirus protein X family. In terms of assembly, may form homodimer. May interact with host CEBPA, CFLAR, CREB1, DDB1, E4F1, HBXIP, HSPD1/HSP60, NFKBIA, POLR2E and SMAD4. Interacts with host SMC5-SMC6 complex and induces its degradation. Interacts with host TRPC4AP; leading to prevent ubiquitination of TRPC4AP. Interacts with host PLSCR1; this interaction promotes ubiquitination and degradation of HBx and impairs HBx-mediated cell proliferation. A fraction may be phosphorylated in insect cells and HepG2 cells, a human hepatoblastoma cell line. Phosphorylated in vitro by host protein kinase C or mitogen-activated protein kinase. N-acetylated in insect cells.

It is found in the host cytoplasm. It localises to the host nucleus. The protein localises to the host mitochondrion. Its function is as follows. Multifunctional protein that plays a role in silencing host antiviral defenses and promoting viral transcription. Does not seem to be essential for HBV infection. May be directly involved in development of cirrhosis and liver cancer (hepatocellular carcinoma). Most of cytosolic activities involve modulation of cytosolic calcium. The effect on apoptosis is controversial depending on the cell types in which the studies have been conducted. May induce apoptosis by localizing in mitochondria and causing loss of mitochondrial membrane potential. May also modulate apoptosis by binding host CFLAR, a key regulator of the death-inducing signaling complex (DISC). Promotes viral transcription by using the host E3 ubiquitin ligase DDB1 to target the SMC5-SMC6 complex to proteasomal degradation. This host complex would otherwise bind to viral episomal DNA, and prevents its transcription. Moderately stimulates transcription of many different viral and cellular transcription elements. Promoters and enhancers stimulated by HBx contain DNA binding sites for NF-kappa-B, AP-1, AP-2, c-EBP, ATF/CREB, or the calcium-activated factor NF-AT. This Homo sapiens (Human) protein is Protein X.